Reading from the N-terminus, the 319-residue chain is GTP 3',8-cyclase (319 aa).

Residues 4 to 227 (KHGRKINYLR…VETDKSSTAL (224 aa)) form the Radical SAM core domain. Arg13 serves as a coordination point for GTP. [4Fe-4S] cluster contacts are provided by Cys20 and Cys24. Tyr26 is a binding site for S-adenosyl-L-methionine. Cys27 provides a ligand contact to [4Fe-4S] cluster. Arg63 contributes to the GTP binding site. Residue Gly67 coordinates S-adenosyl-L-methionine. Thr94 contacts GTP. Residue Ser118 coordinates S-adenosyl-L-methionine. Residue Lys155 coordinates GTP. Met189 contacts S-adenosyl-L-methionine. [4Fe-4S] cluster is bound by residues Cys249 and Cys252. 254–256 (RVR) serves as a coordination point for GTP. Position 266 (Cys266) interacts with [4Fe-4S] cluster.

Belongs to the radical SAM superfamily. MoaA family. As to quaternary structure, monomer and homodimer. It depends on [4Fe-4S] cluster as a cofactor.

The catalysed reaction is GTP + AH2 + S-adenosyl-L-methionine = (8S)-3',8-cyclo-7,8-dihydroguanosine 5'-triphosphate + 5'-deoxyadenosine + L-methionine + A + H(+). It functions in the pathway cofactor biosynthesis; molybdopterin biosynthesis. Catalyzes the cyclization of GTP to (8S)-3',8-cyclo-7,8-dihydroguanosine 5'-triphosphate. This is GTP 3',8-cyclase from Clostridium botulinum (strain Langeland / NCTC 10281 / Type F).